The following is a 371-amino-acid chain: Histidinol-phosphate aminotransferase (371 aa).

Position 221 is an N6-(pyridoxal phosphate)lysine (lysine 221).

The protein belongs to the class-II pyridoxal-phosphate-dependent aminotransferase family. Histidinol-phosphate aminotransferase subfamily. As to quaternary structure, homodimer. It depends on pyridoxal 5'-phosphate as a cofactor.

It carries out the reaction L-histidinol phosphate + 2-oxoglutarate = 3-(imidazol-4-yl)-2-oxopropyl phosphate + L-glutamate. It functions in the pathway amino-acid biosynthesis; L-histidine biosynthesis; L-histidine from 5-phospho-alpha-D-ribose 1-diphosphate: step 7/9. The sequence is that of Histidinol-phosphate aminotransferase from Pseudoalteromonas atlantica (strain T6c / ATCC BAA-1087).